Consider the following 1141-residue polypeptide: IgM protease (1141 aa).

Positions 1-32 (MNIQERFSLRKSAVGLVSVSLLCAIYTSTVAA) are cleaved as a signal peptide. Cys-195 (nucleophile) is an active-site residue. Disordered regions lie at residues 518-544 (PDLP…STNL), 725-749 (EKDS…NVET), 781-805 (LEKD…TNVE), and 839-860 (EKDS…ESTS). Over residues 526–544 (STVSDVDSLSSQETSSTNL) the composition is skewed to polar residues. 2 stretches are compositionally biased toward low complexity: residues 738–749 (EPTSSESTNVET) and 795–805 (EPTSSESTNVE). The chain crosses the membrane as a helical span at residues 1119 to 1136 (IMGVGLLTLVLGSALGLL).

This sequence belongs to the peptidase C66 family.

It localises to the cell membrane. The protein resides in the secreted. Its activity is regulated as follows. IgM cleavage is inhibited by iodoacetamide but not by AEBSF, bestatin, E-64, Z-LVG-CHN(2), or EDTA. Its function is as follows. Catalyzes the specific cleavage of porcine IgM bound to the bacterial surface. Can degrade only IgM but neither IgG nor IgA, and is host specific, as it exclusively cleaves porcine IgM but not IgM from six other species, including human, mouse and a closely related member of the Suidae family. Promotes survival in porcine blood. Is thus involved in a so-far-unknown mechanism of host-pathogen interaction at an early stage of the host immune response. This chain is IgM protease (ide), found in Streptococcus suis (strain P1/7).